We begin with the raw amino-acid sequence, 125 residues long: Succinate dehydrogenase assembly factor 3, mitochondrial (125 aa).

Residues 1-42 (MRTTNHLYRTVHRQGKPLLPPLHLYRRILRAHRTFPPAQRAL) constitute a mitochondrion transit peptide.

It belongs to the complex I LYR family. SDHAF3 subfamily. As to quaternary structure, interacts with the iron-sulfur protein subunit within the SDH catalytic dimer.

It is found in the mitochondrion matrix. Its function is as follows. Plays an essential role in the assembly of succinate dehydrogenase (SDH), an enzyme complex (also referred to as respiratory complex II) that is a component of both the tricarboxylic acid (TCA) cycle and the mitochondrial electron transport chain, and which couples the oxidation of succinate to fumarate with the reduction of ubiquinone (coenzyme Q) to ubiquinol. Promotes maturation of the iron-sulfur protein subunit of the SDH catalytic dimer, protecting it from the deleterious effects of oxidants. May act together with SDHAF1. This chain is Succinate dehydrogenase assembly factor 3, mitochondrial, found in Eremothecium gossypii (strain ATCC 10895 / CBS 109.51 / FGSC 9923 / NRRL Y-1056) (Yeast).